Reading from the N-terminus, the 303-residue chain is Bifunctional protein FolD 2 (303 aa).

NADP(+) contacts are provided by residues 169 to 171 (GRS), S194, and I235.

This sequence belongs to the tetrahydrofolate dehydrogenase/cyclohydrolase family. As to quaternary structure, homodimer.

It carries out the reaction (6R)-5,10-methylene-5,6,7,8-tetrahydrofolate + NADP(+) = (6R)-5,10-methenyltetrahydrofolate + NADPH. It catalyses the reaction (6R)-5,10-methenyltetrahydrofolate + H2O = (6R)-10-formyltetrahydrofolate + H(+). It functions in the pathway one-carbon metabolism; tetrahydrofolate interconversion. In terms of biological role, catalyzes the oxidation of 5,10-methylenetetrahydrofolate to 5,10-methenyltetrahydrofolate and then the hydrolysis of 5,10-methenyltetrahydrofolate to 10-formyltetrahydrofolate. This is Bifunctional protein FolD 2 from Pseudomonas putida (strain GB-1).